A 310-amino-acid polypeptide reads, in one-letter code: Alpha/beta hydrolase domain-containing protein 17A (310 aa).

The segment at valine 38 to alanine 61 is disordered. Catalysis depends on charge relay system residues serine 190, aspartate 255, and histidine 284. Phosphoserine is present on serine 307.

The protein belongs to the AB hydrolase superfamily. ABHD17 family. Post-translationally, palmitoylated on cysteine residues located in a cysteine cluster at the N-terminus which promotes membrane localization. Palmitoylation is required for post-synaptic localization and for depalmitoylating activity towards DLG4/PSD95.

It localises to the cell membrane. The protein localises to the endosome membrane. Its subcellular location is the cell projection. It is found in the dendritic spine. The protein resides in the postsynaptic density membrane. It catalyses the reaction S-hexadecanoyl-L-cysteinyl-[protein] + H2O = L-cysteinyl-[protein] + hexadecanoate + H(+). In terms of biological role, hydrolyzes fatty acids from S-acylated cysteine residues in proteins. Has depalmitoylating activity towards NRAS. Has depalmitoylating activity towards DLG4/PSD95. May have depalmitoylating activity towars MAP6. This chain is Alpha/beta hydrolase domain-containing protein 17A, found in Mus musculus (Mouse).